We begin with the raw amino-acid sequence, 35 residues long: Photosystem II reaction center protein T (35 aa).

A helical membrane pass occupies residues 3–23; that stretch reads ALVYTFLLVSTLGIIFFAIFF.

This sequence belongs to the PsbT family. PSII is composed of 1 copy each of membrane proteins PsbA, PsbB, PsbC, PsbD, PsbE, PsbF, PsbH, PsbI, PsbJ, PsbK, PsbL, PsbM, PsbT, PsbY, PsbZ, Psb30/Ycf12, at least 3 peripheral proteins of the oxygen-evolving complex and a large number of cofactors. It forms dimeric complexes.

The protein localises to the plastid. The protein resides in the chloroplast thylakoid membrane. Its function is as follows. Found at the monomer-monomer interface of the photosystem II (PS II) dimer, plays a role in assembly and dimerization of PSII. PSII is a light-driven water plastoquinone oxidoreductase, using light energy to abstract electrons from H(2)O, generating a proton gradient subsequently used for ATP formation. The protein is Photosystem II reaction center protein T of Ceratophyllum demersum (Rigid hornwort).